A 499-amino-acid chain; its full sequence is MALRVTADVWLARPWQCLHRTRALGTTAKVAPKTLKPFEAIPQYSRNKWLKMIQILREQGQENLHLEMHQAFQELGPIFRHSAGGAQIVSVMLPEDAEKLHQVESILPHRMPLEPWVAHRELRGLRRGVFLLNGADWRFNRLQLNPNMLSPKAIQSFVPFVDVVARDFVENLKKRMLENVHGSMSINIQSNMFNYTMEASHFVISGERLGLTGHDLKPESVTFTHALHSMFKSTTQLMFLPKSLTRWTSTRVWKEHFDSWDIISEYVTKCIKNVYRELAEGRQQSWSVISEMVAQSTLSMDAIHANSMELIAGSVDTTAISLVMTLFELARNPDVQQALRQESLAAEASIVANPQKAMSDLPLLRAALKETLRLYPVGSFVERIVHSDLVLQNYHVPAGTFVIIYLYSMGRNPAVFPRPERYMPQRWLERKRSFQHLAFGFGVRQCLGRRLAEVEMLLLLHHMLKTFQVETLRQEDMQMVFRFLLMPSSSPFLTFRPVS.

The N-terminal 24 residues, 1 to 24, are a transit peptide targeting the mitochondrion; sequence MALRVTADVWLARPWQCLHRTRAL. Cys446 serves as a coordination point for heme.

This sequence belongs to the cytochrome P450 family. Requires heme as cofactor. Adrenal zona fasciculata/reticularis.

The protein localises to the mitochondrion inner membrane. The catalysed reaction is a steroid + 2 reduced [adrenodoxin] + O2 + 2 H(+) = an 11beta-hydroxysteroid + 2 oxidized [adrenodoxin] + H2O. It catalyses the reaction 21-hydroxyprogesterone + 2 reduced [adrenodoxin] + O2 + 2 H(+) = corticosterone + 2 oxidized [adrenodoxin] + H2O. It carries out the reaction 21-hydroxyprogesterone + 2 reduced [adrenodoxin] + O2 + 2 H(+) = 18-hydroxy-11-deoxycorticosterone + 2 oxidized [adrenodoxin] + H2O. The enzyme catalyses 21-hydroxyprogesterone + 2 reduced [adrenodoxin] + O2 + 2 H(+) = 19-hydroxy-11-deoxycorticosterone + 2 oxidized [adrenodoxin] + H2O. The catalysed reaction is 11-deoxycortisol + 2 reduced [adrenodoxin] + O2 + 2 H(+) = cortisol + 2 oxidized [adrenodoxin] + H2O. It catalyses the reaction cortisol + 2 reduced [adrenodoxin] + O2 + 2 H(+) = 18-hydroxycortisol + 2 oxidized [adrenodoxin] + H2O. It carries out the reaction 11-deoxycortisol + 2 reduced [adrenodoxin] + O2 + 2 H(+) = 18-hydroxy-11-deoxycortisol + 2 oxidized [adrenodoxin] + H2O. The protein operates within steroid biosynthesis; glucocorticoid biosynthesis. It participates in steroid hormone biosynthesis. Its function is as follows. A cytochrome P450 monooxygenase involved in the biosynthesis of adrenal corticoids. Catalyzes a variety of reactions that are essential for many species, including detoxification, defense, and the formation of endogenous chemicals like steroid hormones. Steroid 11beta, 18- and 19-hydroxylase with preferred regioselectivity at 11beta, then 18, and lastly 19. Catalyzes the hydroxylation of 11-deoxycortisol and 11-deoxycorticosterone (21-hydroxyprogesterone) at 11beta position, yielding cortisol or corticosterone, respectively, but cannot produce aldosterone. Mechanistically, uses molecular oxygen inserting one oxygen atom into a substrate for hydroxylation and reducing the second into a water molecule. Two electrons are provided by NADPH via a two-protein mitochondrial transfer system comprising flavoprotein FDXR (adrenodoxin/ferredoxin reductase) and nonheme iron-sulfur protein FDX1 or FDX2 (adrenodoxin/ferredoxin). Due to its lack of 18-oxidation activity, it is incapable of generating aldosterone. Could also be involved in the androgen metabolic pathway. This chain is Cytochrome P450 11B1, mitochondrial (Cyp11b1), found in Rattus norvegicus (Rat).